Consider the following 230-residue polypeptide: UPF0494 membrane protein PB2B2.14c (230 aa).

The next 3 membrane-spanning stretches (helical) occupy residues W78 to V98, I120 to Y140, and A148 to V168.

This sequence belongs to the UPF0494 family.

Its subcellular location is the membrane. This Schizosaccharomyces pombe (strain 972 / ATCC 24843) (Fission yeast) protein is UPF0494 membrane protein PB2B2.14c.